The following is a 237-amino-acid chain: Large ribosomal subunit protein uL1 (237 aa).

The protein belongs to the universal ribosomal protein uL1 family. Part of the 50S ribosomal subunit.

Binds directly to 23S rRNA. The L1 stalk is quite mobile in the ribosome, and is involved in E site tRNA release. Functionally, protein L1 is also a translational repressor protein, it controls the translation of the L11 operon by binding to its mRNA. This is Large ribosomal subunit protein uL1 from Dehalococcoides mccartyi (strain ATCC BAA-2100 / JCM 16839 / KCTC 5957 / BAV1).